Here is a 307-residue protein sequence, read N- to C-terminus: 4-hydroxythreonine-4-phosphate dehydrogenase (307 aa).

Substrate is bound by residues His126 and Thr127. A divalent metal cation contacts are provided by His156, His195, and His251. The substrate site is built by Lys259, Asn268, and Arg277.

This sequence belongs to the PdxA family. Homodimer. Zn(2+) serves as cofactor. Requires Mg(2+) as cofactor. It depends on Co(2+) as a cofactor.

The protein localises to the cytoplasm. It catalyses the reaction 4-(phosphooxy)-L-threonine + NAD(+) = 3-amino-2-oxopropyl phosphate + CO2 + NADH. It participates in cofactor biosynthesis; pyridoxine 5'-phosphate biosynthesis; pyridoxine 5'-phosphate from D-erythrose 4-phosphate: step 4/5. Catalyzes the NAD(P)-dependent oxidation of 4-(phosphooxy)-L-threonine (HTP) into 2-amino-3-oxo-4-(phosphooxy)butyric acid which spontaneously decarboxylates to form 3-amino-2-oxopropyl phosphate (AHAP). The protein is 4-hydroxythreonine-4-phosphate dehydrogenase of Helicobacter pylori (strain HPAG1).